The following is a 75-amino-acid chain: Large ribosomal subunit protein bL32c (75 aa).

The tract at residues 49–75 (SPGPTTPIKPNPKKQTGRRPRSQRRRT) is disordered. Positions 59–75 (NPKKQTGRRPRSQRRRT) are enriched in basic residues.

The protein belongs to the bacterial ribosomal protein bL32 family.

The protein resides in the plastid. It is found in the chloroplast. The chain is Large ribosomal subunit protein bL32c from Nephroselmis olivacea (Green alga).